An 86-amino-acid polypeptide reads, in one-letter code: Anti-adapter protein IraP (86 aa).

A coiled-coil region spans residues 1–47 (MKNLIAELLLKLAQKEEESKELVAQVEALEIIVTAMLRNMAQSEQQM).

This sequence belongs to the IraP family. As to quaternary structure, interacts with RssB.

The protein resides in the cytoplasm. Its function is as follows. Inhibits RpoS proteolysis by regulating RssB activity, thereby increasing the stability of the sigma stress factor RpoS especially during phosphate and magnesium starvation, but also in stationary phase and during nitrogen starvation. Its effect on RpoS stability is due to its interaction with RssB, which probably blocks the interaction of RssB with RpoS, and the consequent delivery of the RssB-RpoS complex to the ClpXP protein degradation pathway. The protein is Anti-adapter protein IraP of Salmonella arizonae (strain ATCC BAA-731 / CDC346-86 / RSK2980).